Consider the following 102-residue polypeptide: Small ribosomal subunit protein bS6 (102 aa).

It belongs to the bacterial ribosomal protein bS6 family.

Binds together with bS18 to 16S ribosomal RNA. The sequence is that of Small ribosomal subunit protein bS6 from Deinococcus deserti (strain DSM 17065 / CIP 109153 / LMG 22923 / VCD115).